Consider the following 383-residue polypeptide: Probable indole-3-pyruvate monooxygenase YUCCA10 (383 aa).

9–14 provides a ligand contact to FAD; the sequence is GAGPAG. Residue 177–182 coordinates NADP(+); it reads GGGNSG.

It belongs to the FMO family. FAD serves as cofactor.

The enzyme catalyses indole-3-pyruvate + NADPH + O2 + H(+) = (indol-3-yl)acetate + CO2 + NADP(+) + H2O. It participates in plant hormone metabolism; auxin biosynthesis. Functionally, involved in auxin biosynthesis. This Arabidopsis thaliana (Mouse-ear cress) protein is Probable indole-3-pyruvate monooxygenase YUCCA10 (YUC10).